Here is a 165-residue protein sequence, read N- to C-terminus: Methylated-DNA--protein-cysteine methyltransferase (165 aa).

Cys-126 functions as the Nucleophile; methyl group acceptor in the catalytic mechanism.

Belongs to the MGMT family.

The protein localises to the cytoplasm. The catalysed reaction is a 6-O-methyl-2'-deoxyguanosine in DNA + L-cysteinyl-[protein] = S-methyl-L-cysteinyl-[protein] + a 2'-deoxyguanosine in DNA. It catalyses the reaction a 4-O-methyl-thymidine in DNA + L-cysteinyl-[protein] = a thymidine in DNA + S-methyl-L-cysteinyl-[protein]. In terms of biological role, involved in the cellular defense against the biological effects of O6-methylguanine (O6-MeG) and O4-methylthymine (O4-MeT) in DNA. Repairs the methylated nucleobase in DNA by stoichiometrically transferring the methyl group to a cysteine residue in the enzyme. This is a suicide reaction: the enzyme is irreversibly inactivated. The chain is Methylated-DNA--protein-cysteine methyltransferase from Mycolicibacterium paratuberculosis (strain ATCC BAA-968 / K-10) (Mycobacterium paratuberculosis).